Consider the following 453-residue polypeptide: Nuclear distribution protein PAC1-2 (453 aa).

A LisH domain is found at 9 to 41; it reads QADELHKSIVAYLTANNLSTTAATLREELSLGE. Positions 63 to 87 form a coiled coil; that stretch reads VVRLQKKVMDLESRSVALQSELEHS. The interval 84-108 is disordered; it reads LEHSTPASLSKRKDPTSWLPRSPPR. 7 WD repeats span residues 113 to 154, 156 to 196, 200 to 243, 246 to 285, 290 to 350, 352 to 391, and 396 to 448; these read SHQA…RTLK, HTRA…KNTR, GHDH…CIKT, GHTG…PESK, GHEN…IKTL, GHDN…RCVK, and AHGQ…DKVV.

Belongs to the WD repeat LIS1/nudF family. As to quaternary structure, self-associates. Interacts with NDL1 and dynein.

The protein localises to the cytoplasm. Its subcellular location is the cytoskeleton. It is found in the spindle pole. Positively regulates the activity of the minus-end directed microtubule motor protein dynein. May enhance dynein-mediated microtubule sliding by targeting dynein to the microtubule plus end. Required for nuclear migration during vegetative growth as well as development. Required for retrograde early endosome (EE) transport from the hyphal tip. Required for localization of dynein to the mitotic spindle poles. Recruits additional proteins to the dynein complex at SPBs. In Chaetomium globosum (strain ATCC 6205 / CBS 148.51 / DSM 1962 / NBRC 6347 / NRRL 1970) (Soil fungus), this protein is Nuclear distribution protein PAC1-2.